Here is a 202-residue protein sequence, read N- to C-terminus: dTTP/UTP pyrophosphatase (202 aa).

The Proton acceptor role is filled by Asp80.

It belongs to the Maf family. YhdE subfamily. It depends on a divalent metal cation as a cofactor.

The protein localises to the cytoplasm. The enzyme catalyses dTTP + H2O = dTMP + diphosphate + H(+). The catalysed reaction is UTP + H2O = UMP + diphosphate + H(+). Nucleoside triphosphate pyrophosphatase that hydrolyzes dTTP and UTP. May have a dual role in cell division arrest and in preventing the incorporation of modified nucleotides into cellular nucleic acids. This Alkalilimnicola ehrlichii (strain ATCC BAA-1101 / DSM 17681 / MLHE-1) protein is dTTP/UTP pyrophosphatase.